The following is a 441-amino-acid chain: Protein cortex (441 aa).

WD repeat units lie at residues 110–148 (SITS…VDQG), 149–187 (QTMF…QFVQ), 193–233 (IQIC…KSLV), 235–276 (IEGA…RFMK), 277–320 (TNEI…KLRQ), 345–379 (SLWS…ESHT), and 380–420 (GLNR…KILA). The D-box signature appears at 379-390 (TGLNRIRTMVFS).

Belongs to the WD repeat CORT family.

It is found in the cytoplasm. Controls wing pigmentation patterning, possibly by regulating scale cell development. Probably acts as an activator of the anaphase promoting complex/cyclosome (APC/C) that promotes the ubiquitin ligase activity and substrate specificity of the APC/C. This is Protein cortex from Biston betularia (Pepper-and-salt geometer moth).